The sequence spans 234 residues: Cytidylate kinase (234 aa).

10–18 is an ATP binding site; it reads GYSACGKST.

This sequence belongs to the cytidylate kinase family. Type 1 subfamily.

The protein resides in the cytoplasm. It catalyses the reaction CMP + ATP = CDP + ADP. The catalysed reaction is dCMP + ATP = dCDP + ADP. The sequence is that of Cytidylate kinase from Cytophaga hutchinsonii (strain ATCC 33406 / DSM 1761 / CIP 103989 / NBRC 15051 / NCIMB 9469 / D465).